The chain runs to 173 residues: Co-chaperone protein HscB (173 aa).

The 73-residue stretch at 2–74 (DYFTLLGMPN…LSRAEYMLSL (73 aa)) folds into the J domain.

It belongs to the HscB family. Interacts with HscA and stimulates its ATPase activity. Interacts with IscU.

Co-chaperone involved in the maturation of iron-sulfur cluster-containing proteins. Seems to help targeting proteins to be folded toward HscA. The sequence is that of Co-chaperone protein HscB from Proteus mirabilis (strain HI4320).